The chain runs to 612 residues: Dihydroxy-acid dehydratase (612 aa).

A Mg(2+)-binding site is contributed by aspartate 81. Residue cysteine 122 coordinates [2Fe-2S] cluster. Mg(2+) contacts are provided by aspartate 123 and lysine 124. Lysine 124 carries the N6-carboxylysine modification. Position 195 (cysteine 195) interacts with [2Fe-2S] cluster. Glutamate 491 is a Mg(2+) binding site. The Proton acceptor role is filled by serine 517.

This sequence belongs to the IlvD/Edd family. As to quaternary structure, homodimer. [2Fe-2S] cluster is required as a cofactor. Requires Mg(2+) as cofactor.

It carries out the reaction (2R)-2,3-dihydroxy-3-methylbutanoate = 3-methyl-2-oxobutanoate + H2O. The catalysed reaction is (2R,3R)-2,3-dihydroxy-3-methylpentanoate = (S)-3-methyl-2-oxopentanoate + H2O. The protein operates within amino-acid biosynthesis; L-isoleucine biosynthesis; L-isoleucine from 2-oxobutanoate: step 3/4. It functions in the pathway amino-acid biosynthesis; L-valine biosynthesis; L-valine from pyruvate: step 3/4. Its function is as follows. Functions in the biosynthesis of branched-chain amino acids. Catalyzes the dehydration of (2R,3R)-2,3-dihydroxy-3-methylpentanoate (2,3-dihydroxy-3-methylvalerate) into 2-oxo-3-methylpentanoate (2-oxo-3-methylvalerate) and of (2R)-2,3-dihydroxy-3-methylbutanoate (2,3-dihydroxyisovalerate) into 2-oxo-3-methylbutanoate (2-oxoisovalerate), the penultimate precursor to L-isoleucine and L-valine, respectively. The polypeptide is Dihydroxy-acid dehydratase (Sinorhizobium fredii (strain NBRC 101917 / NGR234)).